Here is a 61-residue protein sequence, read N- to C-terminus: MARYRHSRSRSRSRYRRRRRRRSRYRSQRRRYRRHRRSGRRRRRGRRRGYRRRYHSHRRRY.

The disordered stretch occupies residues 1–61 (MARYRHSRSR…RRYHSHRRRY (61 aa)).

This sequence belongs to the protamine P1 family. As to expression, testis.

Its subcellular location is the nucleus. The protein localises to the chromosome. Protamines substitute for histones in the chromatin of sperm during the haploid phase of spermatogenesis. They compact sperm DNA into a highly condensed, stable and inactive complex. The protein is Sperm protamine P1 (PRM1) of Notoryctes typhlops (Southern marsupial mole).